The sequence spans 89 residues: UPF0175 protein APE_0276a (89 aa).

It belongs to the UPF0175 family.

This Aeropyrum pernix (strain ATCC 700893 / DSM 11879 / JCM 9820 / NBRC 100138 / K1) protein is UPF0175 protein APE_0276a.